A 324-amino-acid chain; its full sequence is R2-like ligand binding oxidase (324 aa).

Positions 79, 112, and 115 each coordinate Mn(2+). The 3-(O4'-tyrosyl)-valine (Val-Tyr) cross-link spans 82-173; sequence VTEDIQPFMK…VNQVRASVTY (92 aa). Residue glutamate 112 participates in Fe cation binding. Glutamate 178, glutamate 213, and histidine 216 together coordinate Fe cation. The disordered stretch occupies residues 304-324; it reads PEALEEKFGEEDAKAMSEAAG. The span at 307–318 shows a compositional bias: basic and acidic residues; the sequence is LEEKFGEEDAKA.

The protein belongs to the ribonucleoside diphosphate reductase small chain family. R2-like ligand binding oxidase subfamily. As to quaternary structure, homodimer. Fe cation is required as a cofactor. Mn(2+) serves as cofactor.

In terms of biological role, probable oxidase. The polypeptide is R2-like ligand binding oxidase (Rhodococcus jostii (strain RHA1)).